The sequence spans 290 residues: Probable aquaporin PIP2-1 (290 aa).

The next 2 helical transmembrane spans lie at 43-63 (AVIA…ATVI) and 80-100 (CGGV…FILV). The short motif at 112–114 (NPA) is the NPA 1 element. 3 consecutive transmembrane segments (helical) span residues 131-151 (ILYI…VKAF), 173-193 (GTGL…VFSA), and 207-227 (VLAP…TIPI). The NPA 2 motif lies at 233–235 (NPA). Residues 255 to 275 (IFWVGPFVGAAIAAFYHQYIL) traverse the membrane as a helical segment.

This sequence belongs to the MIP/aquaporin (TC 1.A.8) family. PIP (TC 1.A.8.11) subfamily. Expressed in roots, leaves and anthers.

It is found in the cell membrane. Functionally, aquaporins facilitate the transport of water and small neutral solutes across cell membranes. This Oryza sativa subsp. japonica (Rice) protein is Probable aquaporin PIP2-1 (PIP2-1).